A 375-amino-acid chain; its full sequence is Killer cell immunoglobulin-like receptor 2DL5B (375 aa).

Positions M1–T21 are cleaved as a signal peptide. Over H22–H238 the chain is Extracellular. 2 Ig-like C2-type domains span residues G42–S102 and G137–S200. 2 disulfides stabilise this stretch: C49–C95 and C144–C193. The tract at residues V213–T233 is disordered. N-linked (GlcNAc...) asparagine glycosylation is present at N218. Low complexity predominate over residues S219–S231. A helical membrane pass occupies residues L239 to L259. At L260 to I375 the chain is on the cytoplasmic side. The segment at A334–I375 is disordered. Residues R355 to A366 are compositionally biased toward polar residues.

This sequence belongs to the immunoglobulin superfamily.

The protein localises to the cell membrane. In terms of biological role, receptor on natural killer (NK) cells for HLA-C alleles. Inhibits the activity of NK cells thus preventing cell lysis. The polypeptide is Killer cell immunoglobulin-like receptor 2DL5B (KIR2DL5B) (Homo sapiens (Human)).